Consider the following 63-residue polypeptide: Sperm protamine P1 (63 aa).

A disordered region spans residues 1–47 (MARCRRHIRSRSRSRNQCQRRRRRSHYNRRRTYRRSRRHSRRRRVRR).

It belongs to the protamine P1 family. In terms of tissue distribution, testis.

Its subcellular location is the nucleus. The protein localises to the chromosome. Its function is as follows. Protamines substitute for histones in the chromatin of sperm during the haploid phase of spermatogenesis. They compact sperm DNA into a highly condensed, stable and inactive complex. The chain is Sperm protamine P1 (PRM1) from Planigale tenuirostris (Narrow-nosed planigale).